We begin with the raw amino-acid sequence, 1220 residues long: DNA-directed RNA polymerase subunit beta (1220 aa).

The protein belongs to the RNA polymerase beta chain family. The RNAP catalytic core consists of 2 alpha, 1 beta, 1 beta' and 1 omega subunit. When a sigma factor is associated with the core the holoenzyme is formed, which can initiate transcription.

It catalyses the reaction RNA(n) + a ribonucleoside 5'-triphosphate = RNA(n+1) + diphosphate. DNA-dependent RNA polymerase catalyzes the transcription of DNA into RNA using the four ribonucleoside triphosphates as substrates. In Mesomycoplasma hyopneumoniae (strain J / ATCC 25934 / NCTC 10110) (Mycoplasma hyopneumoniae), this protein is DNA-directed RNA polymerase subunit beta.